The sequence spans 162 residues: Selenoprotein F (162 aa).

Positions 1–28 (MAAEPGGWLGPALGLRLLLATALQMVSA) are cleaved as a signal peptide. Residue U93 is a non-standard amino acid, selenocysteine.

It belongs to the selenoprotein M/F family. As to quaternary structure, forms a tight complex with UGGT1/UGCGL1. Interacts with UGGT2/UGCGL2. Interacts with RDH11.

It is found in the endoplasmic reticulum lumen. Its function is as follows. May be involved in redox reactions associated with the formation of disulfide bonds. May contribute to the quality control of protein folding in the endoplasmic reticulum. May regulate protein folding by enhancing the catalytic activity of UGGT1/UGCGL1 and UGGT2/UGCGL2. The chain is Selenoprotein F from Sus scrofa (Pig).